A 312-amino-acid polypeptide reads, in one-letter code: Polyamine aminopropyltransferase (312 aa).

Residues 7–247 enclose the PABS domain; that stretch reads FFWAQEYFTP…GPLGFALAAQ (241 aa). Gln-36 is an S-methyl-5'-thioadenosine binding site. Spermidine-binding residues include His-67 and Glu-95. S-methyl-5'-thioadenosine contacts are provided by residues Asp-115 and 147–148; that span reads DA. Asp-165 functions as the Proton acceptor in the catalytic mechanism. Pro-174 is a binding site for S-methyl-5'-thioadenosine.

This sequence belongs to the spermidine/spermine synthase family. In terms of assembly, homodimer or homotetramer.

The protein resides in the cytoplasm. The catalysed reaction is S-adenosyl 3-(methylsulfanyl)propylamine + putrescine = S-methyl-5'-thioadenosine + spermidine + H(+). Its pathway is amine and polyamine biosynthesis; spermidine biosynthesis; spermidine from putrescine: step 1/1. Functionally, catalyzes the irreversible transfer of a propylamine group from the amino donor S-adenosylmethioninamine (decarboxy-AdoMet) to putrescine (1,4-diaminobutane) to yield spermidine. This Synechococcus sp. (strain JA-3-3Ab) (Cyanobacteria bacterium Yellowstone A-Prime) protein is Polyamine aminopropyltransferase.